Here is a 262-residue protein sequence, read N- to C-terminus: Cell division protein ZapD (262 aa).

It belongs to the ZapD family. Interacts with FtsZ.

It localises to the cytoplasm. Functionally, cell division factor that enhances FtsZ-ring assembly. Directly interacts with FtsZ and promotes bundling of FtsZ protofilaments, with a reduction in FtsZ GTPase activity. The polypeptide is Cell division protein ZapD (Nitrosomonas europaea (strain ATCC 19718 / CIP 103999 / KCTC 2705 / NBRC 14298)).